Reading from the N-terminus, the 261-residue chain is Probable glutathione-independent glyoxalase hsp3103 (261 aa).

Catalysis depends on residues Cys-162, His-163, and Glu-196.

Belongs to the peptidase C56 family. HSP31-like subfamily.

The enzyme catalyses methylglyoxal + H2O = (R)-lactate + H(+). Its function is as follows. Catalyzes the conversion of methylglyoxal (MG) to D-lactate in a single glutathione (GSH)-independent step. May play a role in detoxifying endogenously produced glyoxals. Involved in protection against reactive oxygen species (ROS). This chain is Probable glutathione-independent glyoxalase hsp3103, found in Schizosaccharomyces pombe (strain 972 / ATCC 24843) (Fission yeast).